The sequence spans 750 residues: GTP pyrophosphokinase rsh (750 aa).

One can recognise an HD domain in the interval 45–144 (YFSHPLEVAA…VKLADRLHNM (100 aa)). Residues 390-451 (DQVFCFTPKG…KNGDEVDIIR (62 aa)) form the TGS domain. The segment at 587-613 (AAKVDPAATTPKPGKRALPIRGTNPDL) is disordered. Residues 676-750 (RISVSAINSP…SVSSAKRVNG (75 aa)) form the ACT domain.

It belongs to the RelA/SpoT family.

The enzyme catalyses GTP + ATP = guanosine 3'-diphosphate 5'-triphosphate + AMP. Its function is as follows. Functions as a (p)ppGpp synthase. In eubacteria ppGpp (guanosine 3'-diphosphate 5'-diphosphate) is a mediator of the stringent response that coordinates a variety of cellular activities in response to changes in nutritional abundance. It is necessary for persistence in mice, essential for intracellular growth of Brucella and required for expression of the type IV secretion system VirB and therefore plays a role in adaptation of Brucella to its intracellular host environment. The protein is GTP pyrophosphokinase rsh (rsh) of Brucella melitensis biotype 1 (strain ATCC 23456 / CCUG 17765 / NCTC 10094 / 16M).